The sequence spans 409 residues: Ribose-phosphate pyrophosphokinase 1 (409 aa).

The Mg(2+) site is built by D128, H130, and D143. S199 bears the Phosphoserine mark.

Belongs to the ribose-phosphate pyrophosphokinase family.

The protein resides in the cytoplasm. The enzyme catalyses D-ribose 5-phosphate + ATP = 5-phospho-alpha-D-ribose 1-diphosphate + AMP + H(+). The protein operates within metabolic intermediate biosynthesis; 5-phospho-alpha-D-ribose 1-diphosphate biosynthesis; 5-phospho-alpha-D-ribose 1-diphosphate from D-ribose 5-phosphate (route I): step 1/1. Functionally, 5-phosphoribose 1-diphosphate synthase involved in nucleotide, histidine, and tryptophan biosynthesis. Active in heteromultimeric complexes with other 5-phosphoribose 1-diphosphate synthases. The chain is Ribose-phosphate pyrophosphokinase 1 from Schizosaccharomyces pombe (strain 972 / ATCC 24843) (Fission yeast).